The following is a 478-amino-acid chain: ATP synthase subunit beta (478 aa).

158 to 165 is a binding site for ATP; the sequence is GGAGVGKT.

This sequence belongs to the ATPase alpha/beta chains family. F-type ATPases have 2 components, CF(1) - the catalytic core - and CF(0) - the membrane proton channel. CF(1) has five subunits: alpha(3), beta(3), gamma(1), delta(1), epsilon(1). CF(0) has three main subunits: a(1), b(2) and c(9-12). The alpha and beta chains form an alternating ring which encloses part of the gamma chain. CF(1) is attached to CF(0) by a central stalk formed by the gamma and epsilon chains, while a peripheral stalk is formed by the delta and b chains.

It localises to the cell inner membrane. The catalysed reaction is ATP + H2O + 4 H(+)(in) = ADP + phosphate + 5 H(+)(out). Functionally, produces ATP from ADP in the presence of a proton gradient across the membrane. The catalytic sites are hosted primarily by the beta subunits. The chain is ATP synthase subunit beta from Rhizobium leguminosarum bv. trifolii (strain WSM2304).